We begin with the raw amino-acid sequence, 513 residues long: Light-independent protochlorophyllide reductase subunit B (513 aa).

Aspartate 36 provides a ligand contact to [4Fe-4S] cluster. The active-site Proton donor is the aspartate 299. 434-435 (GM) is a binding site for substrate.

It belongs to the ChlB/BchB/BchZ family. As to quaternary structure, protochlorophyllide reductase is composed of three subunits; ChlL, ChlN and ChlB. Forms a heterotetramer of two ChlB and two ChlN subunits. [4Fe-4S] cluster is required as a cofactor.

It is found in the plastid. The protein resides in the chloroplast. The enzyme catalyses chlorophyllide a + oxidized 2[4Fe-4S]-[ferredoxin] + 2 ADP + 2 phosphate = protochlorophyllide a + reduced 2[4Fe-4S]-[ferredoxin] + 2 ATP + 2 H2O. It functions in the pathway porphyrin-containing compound metabolism; chlorophyll biosynthesis (light-independent). Functionally, component of the dark-operative protochlorophyllide reductase (DPOR) that uses Mg-ATP and reduced ferredoxin to reduce ring D of protochlorophyllide (Pchlide) to form chlorophyllide a (Chlide). This reaction is light-independent. The NB-protein (ChlN-ChlB) is the catalytic component of the complex. This Chaetosphaeridium globosum (Charophycean green alga) protein is Light-independent protochlorophyllide reductase subunit B.